The chain runs to 481 residues: uncharacterized protein (481 aa).

Belongs to the metallophosphoesterase superfamily.

This is an uncharacterized protein from Bacillus subtilis (strain 168).